The chain runs to 275 residues: Penicillin-insensitive murein endopeptidase (275 aa).

The first 19 residues, 1–19, serve as a signal peptide directing secretion; that stretch reads MKKWIAGLLALIAISPVMA. 3 disulfides stabilise this stretch: C44–C264, C187–C235, and C216–C223. Zn(2+)-binding residues include H110, H113, D120, D147, and H211. Residues 234 to 262 form a disordered region; the sequence is GCGAELESWFQPHQPSAKPGKTLPPPLPP.

The protein belongs to the peptidase M74 family. Dimer. Requires Zn(2+) as cofactor.

The protein localises to the periplasm. Murein endopeptidase that cleaves the D-alanyl-meso-2,6-diamino-pimelyl amide bond that connects peptidoglycan strands. Likely plays a role in the removal of murein from the sacculus. In Yersinia enterocolitica serotype O:8 / biotype 1B (strain NCTC 13174 / 8081), this protein is Penicillin-insensitive murein endopeptidase.